A 335-amino-acid chain; its full sequence is 2-acylglycerol O-acyltransferase 1 (335 aa).

A run of 2 helical transmembrane segments spans residues Trp-24–Leu-44 and Tyr-104–Thr-124. Asn-180 carries N-linked (GlcNAc...) asparagine glycosylation.

This sequence belongs to the diacylglycerol acyltransferase family. In terms of tissue distribution, expressed at high level in kidney and stomach. Expressed at lower level in brown and white adipose tissue, uterus and liver. Not detected in small intestine.

The protein localises to the endoplasmic reticulum membrane. It carries out the reaction a 2-acylglycerol + an acyl-CoA = a 1,2-diacylglycerol + CoA. It catalyses the reaction 2-(9Z-octadecenoyl)-glycerol + butanoyl-CoA = 1-butanoyl-2-(9Z-octadecenoyl)-glycerol + CoA. The enzyme catalyses 2-(9Z-octadecenoyl)-glycerol + octanoyl-CoA = 1-octanoyl-2-(9Z-octadecenoyl)-glycerol + CoA. The catalysed reaction is 2-(9Z-octadecenoyl)-glycerol + dodecanoyl-CoA = 1-dodecanoyl-2-(9Z-octadecenoyl)-glycerol + CoA. It carries out the reaction 2-(9Z-octadecenoyl)-glycerol + tetradecanoyl-CoA = 1-tetradecanoyl-2-(9Z-octadecenoyl)-glycerol + CoA. It catalyses the reaction 2-(9Z-octadecenoyl)-glycerol + hexadecanoyl-CoA = 1-hexadecanoyl-2-(9Z-octadecenoyl)-glycerol + CoA. The enzyme catalyses 2-(9Z-octadecenoyl)-glycerol + octadecanoyl-CoA = 1-octadecanoyl-2-(9Z-octadecenoyl)-glycerol + CoA. The catalysed reaction is eicosanoyl-CoA + 2-(9Z-octadecenoyl)-glycerol = 1-eicosanoyl-2-(9Z-octadecenoyl)-glycerol + CoA. It carries out the reaction 2-(9Z-octadecenoyl)-glycerol + (9Z)-octadecenoyl-CoA = 1,2-di-(9Z-octadecenoyl)-glycerol + CoA. It catalyses the reaction 2-(9Z-octadecenoyl)-glycerol + (9Z,12Z)-octadecadienoyl-CoA = 1-(9Z,12Z-octadecadienoyl)-2-(9Z-octadecenoyl)-glycerol + CoA. The enzyme catalyses 2-(9Z-octadecenoyl)-glycerol + (5Z,8Z,11Z,14Z)-eicosatetraenoyl-CoA = 1-(5Z,8Z,11Z,14Z-eicosatetraenoyl)-2-(9Z-octadecenoyl)-glycerol + CoA. The catalysed reaction is a 2-acylglycerol + an acyl-CoA = a 1,2-diacyl-sn-glycerol + CoA. It carries out the reaction a 2-acylglycerol + an acyl-CoA = a 2,3-diacyl-sn-glycerol + CoA. It catalyses the reaction a 1-acylglycerol + an acyl-CoA = a 1,2-diacylglycerol + CoA. The enzyme catalyses 1-dodecanoylglycerol + (9Z)-octadecenoyl-CoA = 1-dodecanoyl-2-(9Z-octadecenoyl)-glycerol + CoA. The catalysed reaction is 1-tetradecanoylglycerol + (9Z)-octadecenoyl-CoA = 1-tetradecanoyl-2-(9Z-octadecenoyl)-glycerol + CoA. It carries out the reaction 1-hexadecanoylglycerol + (9Z)-octadecenoyl-CoA = 1-hexadecanoyl-2-(9Z-octadecenoyl)-glycerol + CoA. It catalyses the reaction 1-(9Z-octadecenoyl)-glycerol + (9Z)-octadecenoyl-CoA = 1,2-di-(9Z-octadecenoyl)-glycerol + CoA. The enzyme catalyses 1-(9Z,12Z-octadecadienoyl)-glycerol + (9Z)-octadecenoyl-CoA = 1-(9Z,12Z-octadecadienoyl)-2-(9Z-octadecenoyl)-glycerol + CoA. The catalysed reaction is 1-(9Z,12Z,15Z-octadecatrienoyl)-glycerol + (9Z)-octadecenoyl-CoA = 1-(9Z,12Z,15Z-octadecatrienoyl)-2-(9Z-octadecenoyl)-glycerol + CoA. It carries out the reaction 1-(5Z,8Z,11Z,14Z-eicosatetraenoyl)-glycerol + (9Z)-octadecenoyl-CoA = 1-(5Z,8Z,11Z,14Z-eicosatetraenoyl)-2-(9Z-octadecenoyl)-glycerol + CoA. It catalyses the reaction a 1-acylglycerol + an acyl-CoA = a 1,3-diacylglycerol + CoA. The enzyme catalyses 1-dodecanoylglycerol + (9Z)-octadecenoyl-CoA = 1-dodecanoyl-3-(9Z-octadecenoyl)-glycerol + CoA. The catalysed reaction is 1-hexadecanoylglycerol + (9Z)-octadecenoyl-CoA = 1-(9Z-octadecenoyl)-3-hexadecanoylglycerol + CoA. It carries out the reaction 1-octadecanoylglycerol + (9Z)-octadecenoyl-CoA = 1-octadecanoyl-3-(9Z-octadecenoyl)-glycerol + CoA. It catalyses the reaction 1-(9Z-octadecenoyl)-sn-glycerol + (9Z)-octadecenoyl-CoA = 1,3-di-(9Z-octadecenoyl)-glycerol + CoA. The enzyme catalyses 1-(9Z,12Z-octadecadienoyl)-glycerol + (9Z)-octadecenoyl-CoA = 1-(9Z-octadecenoyl)-3-(9Z,12Z-octadecadienoyl)-glycerol + CoA. The catalysed reaction is 1-(9Z,12Z,15Z-octadecatrienoyl)-glycerol + (9Z)-octadecenoyl-CoA = 1-(9Z,12Z,15Z-octadecatrienoyl)-3-(9Z-octadecenoyl)-glycerol + CoA. It carries out the reaction a 1-acyl-sn-glycerol + an acyl-CoA = a 1,3-diacyl-sn-glycerol + CoA. It catalyses the reaction a 3-acyl-sn-glycerol + an acyl-CoA = a 1,3-diacyl-sn-glycerol + CoA. The enzyme catalyses 3-octadecanoyl-sn-glycerol + (9Z)-octadecenoyl-CoA = 1-(9Z-octadecenoyl)-3-octadecanoyl-sn-glycerol + CoA. It functions in the pathway glycerolipid metabolism; triacylglycerol biosynthesis. Functionally, involved in glycerolipid synthesis and lipid metabolism. Catalyzes the formation of diacylglycerol, the precursor of triacylglycerol, by transferring the acyl chain of a fatty acyl-CoA to a monoacylglycerol, mainly at the sn-1 or sn-3 positions. It uses both sn-2-monoacylglycerol (2-acylglycerol) and sn-1-monoacylglycerol (1-acyl-sn-glycerol) equally well as substrates, and uses sn-3-monoacylglycerol (3-acyl-sn-glycerol) with lower efficiency. Probably not involved in absorption of dietary fat in the small intestine. This chain is 2-acylglycerol O-acyltransferase 1, found in Mus musculus (Mouse).